The following is a 99-amino-acid chain: High mobility group protein I (99 aa).

A disordered region spans residues 1 to 99 (MSDSPVKKGR…ADTEEVNSSD (99 aa)). The residue at position 4 (Ser-4) is a Phosphoserine; by CDC2 and MAPK. The a.T hook 1 DNA-binding region spans 7 to 19 (KKGRGRPAKAKPE). Residues 16–46 (AKPEETASPKAAKKEEKKVEEVPKKIEESTK) show a composition bias toward basic and acidic residues. Ser-23 is modified (phosphoserine; by MAPK). Residues 54–66 (KKGRGRPSKGDKA) constitute a DNA-binding region (a.T hook 2). Ser-73 is modified (phosphoserine; by PKC). A DNA-binding region (a.T hook 3) is located at residues 74–86 (GKGRGRPAKNAKK). Residues 90–99 (ADTEEVNSSD) show a composition bias toward acidic residues.

This sequence belongs to the HMGA family. In terms of processing, phosphorylated in a cell-cycle dependent manner; substantially reduced in cells that have finished proliferating and are differentiated. Phosphorylation at Ser-4 and Ser-23 results in a 10-fold weakening of DNA-binding activity and altered the mode of protein-DNA interaction.

The protein localises to the nucleus. Its subcellular location is the nucleolus. It localises to the chromosome. Binds preferentially to the minor groove of A+T rich regions in double-stranded DNA via the second and third DBA-binding domains. It is suggested that these proteins could function in nucleosome phasing and in the 3'-end processing of mRNA transcripts. They are also involved in the transcription regulation of genes containing, or in close proximity to A+T-rich regions. In Chironomus tentans (Midge), this protein is High mobility group protein I.